The following is a 462-amino-acid chain: 3-deoxy-D-manno-octulosonic acid transferase (462 aa).

The chain crosses the membrane as a helical; Signal-anchor span at residues 2-22 (MLLYYILSFILLPVYFIIIFI). The RPE1 insert domain maps to 47-90 (SLLDLQMSVNQEGFKVDTEHKATSYVYIHRNASLMYKLSLERSY). Glutamate 104 functions as the Proton acceptor in the catalytic mechanism. CMP-binding positions include 308–309 (PR), 349–351 (FGE), and 374–377 (NILE).

This sequence belongs to the glycosyltransferase group 1 family.

The protein resides in the cell inner membrane. The catalysed reaction is lipid IVA (E. coli) + CMP-3-deoxy-beta-D-manno-octulosonate = alpha-Kdo-(2-&gt;6)-lipid IVA (E. coli) + CMP + H(+). Its pathway is bacterial outer membrane biogenesis; LPS core biosynthesis. Involved in lipopolysaccharide (LPS) biosynthesis. Catalyzes the transfer of 3-deoxy-D-manno-octulosonate (Kdo) residue(s) from CMP-Kdo to lipid IV(A), the tetraacyldisaccharide-1,4'-bisphosphate precursor of lipid A. This Rickettsia typhi (strain ATCC VR-144 / Wilmington) protein is 3-deoxy-D-manno-octulosonic acid transferase (waaA).